The sequence spans 257 residues: Protein Cmaq_1209 (257 aa).

This sequence belongs to the CinA family.

In Caldivirga maquilingensis (strain ATCC 700844 / DSM 13496 / JCM 10307 / IC-167), this protein is Protein Cmaq_1209.